The chain runs to 460 residues: Bifunctional protein GlmU (460 aa).

Residues 1–229 (MSNYAIILAA…FEESLGVNDR (229 aa)) are pyrophosphorylase. Residues 8-11 (LAAG), Lys-22, Gln-72, and 77-78 (GT) contribute to the UDP-N-acetyl-alpha-D-glucosamine site. A Mg(2+)-binding site is contributed by Asp-102. UDP-N-acetyl-alpha-D-glucosamine is bound by residues Gly-139, Glu-154, Asn-169, and Asn-227. Asn-227 serves as a coordination point for Mg(2+). Residues 230 to 250 (VALATAEDVMRRRINKTHMIN) form a linker region. The N-acetyltransferase stretch occupies residues 251–460 (GVTFQNPNAT…KKPHHPSQQK (210 aa)). Residues Arg-332 and Lys-350 each coordinate UDP-N-acetyl-alpha-D-glucosamine. His-362 acts as the Proton acceptor in catalysis. Positions 365 and 376 each coordinate UDP-N-acetyl-alpha-D-glucosamine. Acetyl-CoA is bound by residues Ala-379, 385–386 (NY), Ser-404, Ala-422, and Arg-439.

This sequence in the N-terminal section; belongs to the N-acetylglucosamine-1-phosphate uridyltransferase family. The protein in the C-terminal section; belongs to the transferase hexapeptide repeat family. As to quaternary structure, homotrimer. Mg(2+) serves as cofactor.

It is found in the cytoplasm. The catalysed reaction is alpha-D-glucosamine 1-phosphate + acetyl-CoA = N-acetyl-alpha-D-glucosamine 1-phosphate + CoA + H(+). It catalyses the reaction N-acetyl-alpha-D-glucosamine 1-phosphate + UTP + H(+) = UDP-N-acetyl-alpha-D-glucosamine + diphosphate. The protein operates within nucleotide-sugar biosynthesis; UDP-N-acetyl-alpha-D-glucosamine biosynthesis; N-acetyl-alpha-D-glucosamine 1-phosphate from alpha-D-glucosamine 6-phosphate (route II): step 2/2. It participates in nucleotide-sugar biosynthesis; UDP-N-acetyl-alpha-D-glucosamine biosynthesis; UDP-N-acetyl-alpha-D-glucosamine from N-acetyl-alpha-D-glucosamine 1-phosphate: step 1/1. Its pathway is bacterial outer membrane biogenesis; LPS lipid A biosynthesis. Functionally, catalyzes the last two sequential reactions in the de novo biosynthetic pathway for UDP-N-acetylglucosamine (UDP-GlcNAc). The C-terminal domain catalyzes the transfer of acetyl group from acetyl coenzyme A to glucosamine-1-phosphate (GlcN-1-P) to produce N-acetylglucosamine-1-phosphate (GlcNAc-1-P), which is converted into UDP-GlcNAc by the transfer of uridine 5-monophosphate (from uridine 5-triphosphate), a reaction catalyzed by the N-terminal domain. The polypeptide is Bifunctional protein GlmU (Streptococcus thermophilus (strain ATCC BAA-491 / LMD-9)).